Consider the following 670-residue polypeptide: DNA ligase (670 aa).

Residues 34-38 (DAEYD), 84-85 (SL), 116-119 (EHKV), R139, E174, Y226, K291, and K315 contribute to the NAD(+) site. K118 acts as the N6-AMP-lysine intermediate in catalysis. 4 residues coordinate Zn(2+): C409, C412, C425, and C430. The BRCT domain occupies 586-670 (EVSDLLSGLT…LKEKGAPVPA (85 aa)).

The protein belongs to the NAD-dependent DNA ligase family. LigA subfamily. It depends on Mg(2+) as a cofactor.

The catalysed reaction is NAD(+) + (deoxyribonucleotide)n-3'-hydroxyl + 5'-phospho-(deoxyribonucleotide)m = (deoxyribonucleotide)n+m + AMP + beta-nicotinamide D-nucleotide.. DNA ligase that catalyzes the formation of phosphodiester linkages between 5'-phosphoryl and 3'-hydroxyl groups in double-stranded DNA using NAD as a coenzyme and as the energy source for the reaction. It is essential for DNA replication and repair of damaged DNA. This is DNA ligase from Thermus filiformis.